The following is a 392-amino-acid chain: 8-amino-7-oxononanoate synthase (392 aa).

Arg-26 contributes to the substrate binding site. 112–113 serves as a coordination point for pyridoxal 5'-phosphate; that stretch reads GF. His-137 serves as a coordination point for substrate. Residues Ser-187, His-215, and Thr-241 each contribute to the pyridoxal 5'-phosphate site. Lys-244 is modified (N6-(pyridoxal phosphate)lysine). Thr-357 contacts substrate.

Belongs to the class-II pyridoxal-phosphate-dependent aminotransferase family. BioF subfamily. In terms of assembly, homodimer. Pyridoxal 5'-phosphate is required as a cofactor.

It carries out the reaction 6-carboxyhexanoyl-[ACP] + L-alanine + H(+) = (8S)-8-amino-7-oxononanoate + holo-[ACP] + CO2. It participates in cofactor biosynthesis; biotin biosynthesis. Its function is as follows. Catalyzes the decarboxylative condensation of pimeloyl-[acyl-carrier protein] and L-alanine to produce 8-amino-7-oxononanoate (AON), [acyl-carrier protein], and carbon dioxide. This Photobacterium profundum (strain SS9) protein is 8-amino-7-oxononanoate synthase.